The chain runs to 454 residues: tRNA modification GTPase MnmE (454 aa).

Residues Arg-23, Glu-80, and Lys-120 each coordinate (6S)-5-formyl-5,6,7,8-tetrahydrofolate. The TrmE-type G domain maps to 216–377 (GMKVVIAGRP…LRNHLKQSMG (162 aa)). Residue Asn-226 participates in K(+) binding. Residues 226–231 (NAGKSS), 245–251 (TDIAGTT), 270–273 (DTAG), 335–338 (NKAD), and 358–360 (SAR) contribute to the GTP site. Mg(2+) is bound at residue Ser-230. Residues Thr-245, Ile-247, and Thr-250 each coordinate K(+). A Mg(2+)-binding site is contributed by Thr-251. Lys-454 is a binding site for (6S)-5-formyl-5,6,7,8-tetrahydrofolate.

It belongs to the TRAFAC class TrmE-Era-EngA-EngB-Septin-like GTPase superfamily. TrmE GTPase family. As to quaternary structure, homodimer. Heterotetramer of two MnmE and two MnmG subunits. Requires K(+) as cofactor.

The protein resides in the cytoplasm. Its function is as follows. Exhibits a very high intrinsic GTPase hydrolysis rate. Involved in the addition of a carboxymethylaminomethyl (cmnm) group at the wobble position (U34) of certain tRNAs, forming tRNA-cmnm(5)s(2)U34. The polypeptide is tRNA modification GTPase MnmE (Escherichia coli (strain SMS-3-5 / SECEC)).